Consider the following 301-residue polypeptide: RNA polymerase II holoenzyme cyclin-like subunit (301 aa).

One can recognise a Cyclin N-terminal domain in the interval 53–142 (QQLIKLGKRM…LGECEFALIS (90 aa)).

Belongs to the cyclin family. Cyclin C subfamily. As to quaternary structure, component of the srb8-11 complex, a regulatory module of the Mediator complex.

The protein resides in the nucleus. In terms of biological role, component of the srb8-11 complex. The srb8-11 complex is a regulatory module of the Mediator complex which is itself involved in regulation of basal and activated RNA polymerase II-dependent transcription. The srb8-11 complex may be involved in the transcriptional repression of a subset of genes regulated by Mediator. It may inhibit the association of the Mediator complex with RNA polymerase II to form the holoenzyme complex. The srb8-11 complex phosphorylates the C-terminal domain (CTD) of the largest subunit of RNA polymerase II. This is RNA polymerase II holoenzyme cyclin-like subunit (ssn8) from Aspergillus oryzae (strain ATCC 42149 / RIB 40) (Yellow koji mold).